The primary structure comprises 71 residues: Large ribosomal subunit protein bL28 (71 aa).

The protein belongs to the bacterial ribosomal protein bL28 family.

The chain is Large ribosomal subunit protein bL28 from Rubrobacter xylanophilus (strain DSM 9941 / JCM 11954 / NBRC 16129 / PRD-1).